The following is a 324-amino-acid chain: Glyoxylate/hydroxypyruvate reductase B (324 aa).

Active-site residues include Arg237 and Glu266. The Proton donor role is filled by His285.

It belongs to the D-isomer specific 2-hydroxyacid dehydrogenase family. GhrB subfamily. As to quaternary structure, homodimer.

The protein resides in the cytoplasm. The enzyme catalyses glycolate + NADP(+) = glyoxylate + NADPH + H(+). The catalysed reaction is (R)-glycerate + NAD(+) = 3-hydroxypyruvate + NADH + H(+). It catalyses the reaction (R)-glycerate + NADP(+) = 3-hydroxypyruvate + NADPH + H(+). Catalyzes the NADPH-dependent reduction of glyoxylate and hydroxypyruvate into glycolate and glycerate, respectively. This chain is Glyoxylate/hydroxypyruvate reductase B, found in Salmonella dublin (strain CT_02021853).